A 200-amino-acid polypeptide reads, in one-letter code: dTTP/UTP pyrophosphatase (200 aa).

Residue D73 is the Proton acceptor of the active site.

It belongs to the Maf family. YhdE subfamily. It depends on a divalent metal cation as a cofactor.

It is found in the cytoplasm. The enzyme catalyses dTTP + H2O = dTMP + diphosphate + H(+). It carries out the reaction UTP + H2O = UMP + diphosphate + H(+). Nucleoside triphosphate pyrophosphatase that hydrolyzes dTTP and UTP. May have a dual role in cell division arrest and in preventing the incorporation of modified nucleotides into cellular nucleic acids. The chain is dTTP/UTP pyrophosphatase from Chromohalobacter salexigens (strain ATCC BAA-138 / DSM 3043 / CIP 106854 / NCIMB 13768 / 1H11).